The primary structure comprises 200 residues: 3-isopropylmalate dehydratase small subunit (200 aa).

The protein belongs to the LeuD family. LeuD type 1 subfamily. As to quaternary structure, heterodimer of LeuC and LeuD.

The catalysed reaction is (2R,3S)-3-isopropylmalate = (2S)-2-isopropylmalate. It functions in the pathway amino-acid biosynthesis; L-leucine biosynthesis; L-leucine from 3-methyl-2-oxobutanoate: step 2/4. Its function is as follows. Catalyzes the isomerization between 2-isopropylmalate and 3-isopropylmalate, via the formation of 2-isopropylmaleate. The sequence is that of 3-isopropylmalate dehydratase small subunit from Sodalis glossinidius (strain morsitans).